The following is a 291-amino-acid chain: Oxidative stress-responsive serine-rich protein 1 (291 aa).

The segment at 29–139 is disordered; sequence ISLSVGEGPS…NAGENSTSLD (111 aa). The segment covering 65–83 has biased composition (basic residues); it reads STRKSSRGAVRTQRRRRSK. Positions 95–105 are enriched in polar residues; sequence CSTTAPPSSSQ. Thr-143 is subject to Phosphothreonine.

The protein is Oxidative stress-responsive serine-rich protein 1 (Oser1) of Mus musculus (Mouse).